Consider the following 230-residue polypeptide: Cytochrome b6-f complex iron-sulfur subunit, chloroplastic (230 aa).

Residues 1–16 (MASTTLSATPTPSQLS) show a composition bias toward low complexity. Residues 1–20 (MASTTLSATPTPSQLSAAKN) are disordered. The N-terminal 56 residues, 1-56 (MASTTLSATPTPSQLSAAKNGAYSPSRALLGKTARGLYPEKEMVSRKVTCQATSIP), are a transit peptide targeting the chloroplast. The helical transmembrane segment at 73-93 (LLGALSLPTAGMLIPYGAFFV) threads the bilayer. A Rieske domain is found at 116–212 (AAAWLKTHGP…CDISEEGKVV (97 aa)). C158, H160, C176, and H179 together coordinate [2Fe-2S] cluster. An intrachain disulfide couples C163 to C178.

It belongs to the Rieske iron-sulfur protein family. As to quaternary structure, the 4 large subunits of the cytochrome b6-f complex are cytochrome b6, subunit IV (17 kDa polypeptide, petD), cytochrome f and the Rieske protein, while the 4 small subunits are petG, petL, petM and petN. The complex functions as a dimer. [2Fe-2S] cluster serves as cofactor.

Its subcellular location is the plastid. It is found in the chloroplast thylakoid membrane. The catalysed reaction is 2 oxidized [plastocyanin] + a plastoquinol + 2 H(+)(in) = 2 reduced [plastocyanin] + a plastoquinone + 4 H(+)(out). Component of the cytochrome b6-f complex, which mediates electron transfer between photosystem II (PSII) and photosystem I (PSI), cyclic electron flow around PSI, and state transitions. This chain is Cytochrome b6-f complex iron-sulfur subunit, chloroplastic (petC), found in Fritillaria agrestis (Stinkbells).